A 219-amino-acid polypeptide reads, in one-letter code: RING-H2 finger protein ATL78 (219 aa).

The helical transmembrane segment at 57-77 (VMVLSVLLCALVCSLGLNSII) threads the bilayer. The RING-type; atypical zinc finger occupies 131-173 (CAICLSEFVAEERVKLLPTCHHGFHVRCIDKWLSSHSSCPTCR).

The protein belongs to the RING-type zinc finger family. ATL subfamily.

The protein localises to the membrane. The catalysed reaction is S-ubiquitinyl-[E2 ubiquitin-conjugating enzyme]-L-cysteine + [acceptor protein]-L-lysine = [E2 ubiquitin-conjugating enzyme]-L-cysteine + N(6)-ubiquitinyl-[acceptor protein]-L-lysine.. The protein operates within protein modification; protein ubiquitination. In Arabidopsis thaliana (Mouse-ear cress), this protein is RING-H2 finger protein ATL78 (ATL78).